Here is a 993-residue protein sequence, read N- to C-terminus: UPF0182 protein Sare_4110 (993 aa).

7 helical membrane passes run 18-38 (IGVL…VQAW), 61-81 (LLLF…NLWL), 110-130 (LGTW…LSAQ), 171-191 (GVAF…HYVF), 209-229 (AHLS…YVLD), 260-280 (ILAY…NAWM), and 283-303 (LVWP…IGGI). 2 disordered regions span residues 892–937 (QGEK…ADAA) and 974–993 (EQAA…SPGG). A compositionally biased stretch (pro residues) spans 900-929 (STPPPSGETPAPTPTPTPTPSSPSVTPPPV). Positions 976–993 (AAGPGSAATPTGSPSPGG) are enriched in low complexity.

It belongs to the UPF0182 family.

It localises to the cell membrane. This is UPF0182 protein Sare_4110 from Salinispora arenicola (strain CNS-205).